A 772-amino-acid chain; its full sequence is Polyribonucleotide nucleotidyltransferase (772 aa).

Mg(2+) is bound by residues Asp488 and Asp494. The region spanning 555–614 is the KH domain; it reads PRLTTLKINPEKIRDVIGKGGAVIRGLQEETGTTINIDEDGTITIASTDPEKAEFAKKRI. An S1 motif domain is found at 624-692; it reads GKVYEGPVTK…EKGRVKLSMK (69 aa). A disordered region spans residues 690 to 772; that stretch reads SMKALTERPA…QPYAPRDSQE (83 aa). Basic and acidic residues predominate over residues 703-740; it reads YSERPPREDRGDRGDRGGERRERSDRGDRGGDRGERAP. Over residues 743–757 the composition is skewed to low complexity; sequence NSEQQQQPRSNEQQP.

This sequence belongs to the polyribonucleotide nucleotidyltransferase family. Mg(2+) serves as cofactor.

Its subcellular location is the cytoplasm. It catalyses the reaction RNA(n+1) + phosphate = RNA(n) + a ribonucleoside 5'-diphosphate. Its function is as follows. Involved in mRNA degradation. Catalyzes the phosphorolysis of single-stranded polyribonucleotides processively in the 3'- to 5'-direction. In Variovorax paradoxus (strain S110), this protein is Polyribonucleotide nucleotidyltransferase.